The primary structure comprises 102 residues: Small ribosomal subunit protein uS10 (102 aa).

The protein belongs to the universal ribosomal protein uS10 family. As to quaternary structure, part of the 30S ribosomal subunit.

Functionally, involved in the binding of tRNA to the ribosomes. This Paracoccus denitrificans (strain Pd 1222) protein is Small ribosomal subunit protein uS10.